A 919-amino-acid chain; its full sequence is Phosphoenolpyruvate carboxylase (919 aa).

Catalysis depends on residues H138 and K579.

Belongs to the PEPCase type 1 family. Mg(2+) is required as a cofactor.

It carries out the reaction oxaloacetate + phosphate = phosphoenolpyruvate + hydrogencarbonate. With respect to regulation, activity not stimulated by acetyl-CoA in the absence of any allosteric inhibitor, while the corresponding protein from E.coli is strongly stimulated. In terms of biological role, forms oxaloacetate, a four-carbon dicarboxylic acid source for the tricarboxylic acid cycle. The polypeptide is Phosphoenolpyruvate carboxylase (ppc) (Corynebacterium glutamicum (strain ATCC 13032 / DSM 20300 / JCM 1318 / BCRC 11384 / CCUG 27702 / LMG 3730 / NBRC 12168 / NCIMB 10025 / NRRL B-2784 / 534)).